Consider the following 73-residue polypeptide: Dipeptidyl peptidase 3 (73 aa).

It belongs to the peptidase M49 family. The cofactor is Zn(2+).

It is found in the membrane. The enzyme catalyses Release of an N-terminal dipeptide from a peptide comprising four or more residues, with broad specificity. Also acts on dipeptidyl 2-naphthylamides.. Functionally, degrades neuropeptide proctolin (RYLPT) by cleavage between Tyr and Leu residues. In Blaberus craniifer (Death's head cockroach), this protein is Dipeptidyl peptidase 3.